We begin with the raw amino-acid sequence, 169 residues long: Ribosome maturation factor RimM (169 aa).

Residues 91-167 enclose the PRC barrel domain; that stretch reads EGEYYFADLI…RIVIATDFAH (77 aa).

Belongs to the RimM family. As to quaternary structure, binds ribosomal protein uS19.

The protein resides in the cytoplasm. An accessory protein needed during the final step in the assembly of 30S ribosomal subunit, possibly for assembly of the head region. Essential for efficient processing of 16S rRNA. May be needed both before and after RbfA during the maturation of 16S rRNA. It has affinity for free ribosomal 30S subunits but not for 70S ribosomes. This chain is Ribosome maturation factor RimM, found in Erythrobacter litoralis (strain HTCC2594).